The chain runs to 3127 residues: Probable polyketide synthase 33 (3127 aa).

The Ketosynthase family 3 (KS3) domain maps to 24–457 (SGDVAVVGIG…GSNVCLILSE (434 aa)). Active-site for beta-ketoacyl synthase activity residues include C196, H335, and H380. The tract at residues 660-693 (GVSADIIIGHSLGEISSAYCSGMIDFQTLCYLTY) is acyl/malonyl transferase. The active-site For acyl/malonyl transferase activity is the S670. An N-terminal hotdog fold region spans residues 958–1080 (GPSIHSLGNN…GNFSLFKHNI (123 aa)). The 300-residue stretch at 958-1257 (GPSIHSLGNN…CTIVGSNPDS (300 aa)) folds into the PKS/mFAS DH domain. H992 acts as the Proton acceptor; for dehydratase activity in catalysis. The interval 1096–1257 (NFTTISKQDF…CTIVGSNPDS (162 aa)) is C-terminal hotdog fold. The active-site Proton donor; for dehydratase activity is D1168. The disordered stretch occupies residues 1369 to 1394 (SNNNNNNNNNNNNNNNNNNNNKNNGY). Residues 1370-1394 (NNNNNNNNNNNNNNNNNNNNKNNGY) show a composition bias toward low complexity. The Carrier domain maps to 2539–2616 (SNNEIIRSTI…QSIEIIKSAH (78 aa)). Position 2576 is an O-(pantetheine 4'-phosphoryl)serine (S2576). The tract at residues 2617–2659 (NKNNNNNNINNNNNNNNNNNNNNNNNNNNNNNNNNNNNNNNNN) is disordered. Residues 2617–2671 (NKNNNNNNINNNNNNNNNNNNNNNNNNNNNNNNNNNNNNNNNNLVKKEQQSLDEF) are a coiled coil. Residues 2937 to 2957 (VLTLYNIPITIFIAILIIDIF) form a helical membrane-spanning segment.

It depends on pantetheine 4'-phosphate as a cofactor.

The protein resides in the membrane. Probable polyketide synthase. The sequence is that of Probable polyketide synthase 33 (pks33) from Dictyostelium discoideum (Social amoeba).